Consider the following 322-residue polypeptide: Probable arabinan endo-1,5-alpha-L-arabinosidase A (322 aa).

Residues 1–19 (MYLPTLAASASLLVGVAHG) form the signal peptide. The active-site Proton acceptor is the Asp34. Catalysis depends on Glu201, which acts as the Proton donor.

This sequence belongs to the glycosyl hydrolase 43 family.

The protein resides in the secreted. The enzyme catalyses Endohydrolysis of (1-&gt;5)-alpha-arabinofuranosidic linkages in (1-&gt;5)-arabinans.. The protein operates within glycan metabolism; L-arabinan degradation. Endo-1,5-alpha-L-arabinanase involved in degradation of pectin. Its preferred substrate is linear 1,5-alpha-L-arabinan. This is Probable arabinan endo-1,5-alpha-L-arabinosidase A (abnA) from Emericella nidulans (strain FGSC A4 / ATCC 38163 / CBS 112.46 / NRRL 194 / M139) (Aspergillus nidulans).